Consider the following 169-residue polypeptide: NADH-quinone oxidoreductase subunit I (169 aa).

4Fe-4S ferredoxin-type domains follow at residues 60–90 and 100–129; these read LRRYPNGEERCIACKLCEVICPAQAIVIEAE and TRYDIDMIKCIYCGLCQEACPVDAIVEGPN. Residues C70, C73, C76, C80, C109, C112, C115, and C119 each coordinate [4Fe-4S] cluster.

Belongs to the complex I 23 kDa subunit family. NDH-1 is composed of 14 different subunits. Subunits NuoA, H, J, K, L, M, N constitute the membrane sector of the complex. [4Fe-4S] cluster is required as a cofactor.

Its subcellular location is the cell membrane. The enzyme catalyses a quinone + NADH + 5 H(+)(in) = a quinol + NAD(+) + 4 H(+)(out). In terms of biological role, NDH-1 shuttles electrons from NADH, via FMN and iron-sulfur (Fe-S) centers, to quinones in the respiratory chain. The immediate electron acceptor for the enzyme in this species is believed to be ubiquinone. Couples the redox reaction to proton translocation (for every two electrons transferred, four hydrogen ions are translocated across the cytoplasmic membrane), and thus conserves the redox energy in a proton gradient. The protein is NADH-quinone oxidoreductase subunit I of Wolbachia pipientis wMel.